We begin with the raw amino-acid sequence, 305 residues long: UDP-3-O-acyl-N-acetylglucosamine deacetylase (305 aa).

Positions 78, 237, and 241 each coordinate Zn(2+). His-264 functions as the Proton donor in the catalytic mechanism.

This sequence belongs to the LpxC family. Zn(2+) serves as cofactor.

It catalyses the reaction a UDP-3-O-[(3R)-3-hydroxyacyl]-N-acetyl-alpha-D-glucosamine + H2O = a UDP-3-O-[(3R)-3-hydroxyacyl]-alpha-D-glucosamine + acetate. The protein operates within glycolipid biosynthesis; lipid IV(A) biosynthesis; lipid IV(A) from (3R)-3-hydroxytetradecanoyl-[acyl-carrier-protein] and UDP-N-acetyl-alpha-D-glucosamine: step 2/6. Functionally, catalyzes the hydrolysis of UDP-3-O-myristoyl-N-acetylglucosamine to form UDP-3-O-myristoylglucosamine and acetate, the committed step in lipid A biosynthesis. This is UDP-3-O-acyl-N-acetylglucosamine deacetylase from Burkholderia pseudomallei (strain 668).